The primary structure comprises 96 residues: Co-chaperonin GroES (96 aa).

Belongs to the GroES chaperonin family. In terms of assembly, heptamer of 7 subunits arranged in a ring. Interacts with the chaperonin GroEL.

Its subcellular location is the cytoplasm. Its function is as follows. Together with the chaperonin GroEL, plays an essential role in assisting protein folding. The GroEL-GroES system forms a nano-cage that allows encapsulation of the non-native substrate proteins and provides a physical environment optimized to promote and accelerate protein folding. GroES binds to the apical surface of the GroEL ring, thereby capping the opening of the GroEL channel. The sequence is that of Co-chaperonin GroES from Methylibium petroleiphilum (strain ATCC BAA-1232 / LMG 22953 / PM1).